The sequence spans 378 residues: Sterol 24-C-methyltransferase erg6 (378 aa).

This sequence belongs to the class I-like SAM-binding methyltransferase superfamily. Erg6/SMT family.

It is found in the nucleus. It localises to the endoplasmic reticulum. It carries out the reaction zymosterol + S-adenosyl-L-methionine = fecosterol + S-adenosyl-L-homocysteine + H(+). It catalyses the reaction lanosterol + S-adenosyl-L-methionine = eburicol + S-adenosyl-L-homocysteine + H(+). The protein operates within steroid metabolism; ergosterol biosynthesis. Its function is as follows. Sterol 24-C-methyltransferase; part of the third module of ergosterol biosynthesis pathway that includes by the late steps of the pathway. Erg6 catalyzes the methyl transfer from S-adenosyl-methionine to the C-24 of zymosterol to form fecosterol. The third module or late pathway involves the ergosterol synthesis itself through consecutive reactions that mainly occur in the endoplasmic reticulum (ER) membrane. Firstly, the squalene synthase erg9 catalyzes the condensation of 2 farnesyl pyrophosphate moieties to form squalene, which is the precursor of all steroids. Secondly, squalene is converted into lanosterol by the consecutive action of the squalene epoxidase erg1 and the lanosterol synthase erg7. The lanosterol 14-alpha-demethylase erg11/cyp1 catalyzes C14-demethylation of lanosterol to produce 4,4'-dimethyl cholesta-8,14,24-triene-3-beta-ol. In the next steps, a complex process involving various demethylation, reduction and desaturation reactions catalyzed by the C-14 reductase erg24 and the C-4 demethylation complex erg25-erg26-erg27 leads to the production of zymosterol. Erg28 likely functions in the C-4 demethylation complex reaction by tethering erg26 and Erg27 to the endoplasmic reticulum or to facilitate interaction between these proteins. Then, the sterol 24-C-methyltransferase erg6 catalyzes the methyl transfer from S-adenosyl-methionine to the C-24 of zymosterol to form fecosterol. The C-8 sterol isomerase erg2 catalyzes the reaction which results in unsaturation at C-7 in the B ring of sterols and thus converts fecosterol to episterol. The sterol-C5-desaturases erg31 and erg32 then catalyze the introduction of a C-5 double bond in the B ring to produce 5-dehydroepisterol. The C-22 sterol desaturase erg5 further converts 5-dehydroepisterol into ergosta-5,7,22,24(28)-tetraen-3beta-ol by forming the C-22(23) double bond in the sterol side chain. Finally, ergosta-5,7,22,24(28)-tetraen-3beta-ol is substrate of the C-24(28) sterol reductase erg4 to produce ergosterol. In the genus Schizosaccharomyces, a second route exists between lanosterol and fecosterol, via the methylation of lanosterol to eburicol by erg6, followed by C14-demethylation by erg11/cyp1 and C4-demethylation by the demethylation complex erg25-erg26-erg27. In Schizosaccharomyces pombe (strain 972 / ATCC 24843) (Fission yeast), this protein is Sterol 24-C-methyltransferase erg6.